Here is a 136-residue protein sequence, read N- to C-terminus: Small ribosomal subunit protein uS19 (136 aa).

This sequence belongs to the universal ribosomal protein uS19 family.

In terms of biological role, protein S19 forms a complex with S13 that binds strongly to the 16S ribosomal RNA. The sequence is that of Small ribosomal subunit protein uS19 (rps19) from Methanothermobacter thermautotrophicus (strain ATCC 29096 / DSM 1053 / JCM 10044 / NBRC 100330 / Delta H) (Methanobacterium thermoautotrophicum).